The chain runs to 569 residues: Glutamine--tRNA ligase (569 aa).

Residues 1 to 23 (MSKDPMSKPTPEPAAHSKAGPAV) form a disordered region. The 'HIGH' region motif lies at 50 to 60 (PEPNGYLHIGH). Residues 51–53 (EPN) and 57–63 (HIGHAKS) contribute to the ATP site. Positions 83 and 228 each coordinate L-glutamine. ATP is bound by residues T247 and 277-278 (RL). The 'KMSKS' region motif lies at 284–288 (ITSKR).

It belongs to the class-I aminoacyl-tRNA synthetase family. Monomer.

It is found in the cytoplasm. The enzyme catalyses tRNA(Gln) + L-glutamine + ATP = L-glutaminyl-tRNA(Gln) + AMP + diphosphate. This chain is Glutamine--tRNA ligase, found in Pseudomonas syringae pv. tomato (strain ATCC BAA-871 / DC3000).